Here is a 500-residue protein sequence, read N- to C-terminus: Kynurenine 3-monooxygenase (500 aa).

Belongs to the aromatic-ring hydroxylase family. KMO subfamily. FAD serves as cofactor.

It localises to the mitochondrion outer membrane. It catalyses the reaction L-kynurenine + NADPH + O2 + H(+) = 3-hydroxy-L-kynurenine + NADP(+) + H2O. It participates in cofactor biosynthesis; NAD(+) biosynthesis; quinolinate from L-kynurenine: step 1/3. In terms of biological role, catalyzes the hydroxylation of L-kynurenine (L-Kyn) to form 3-hydroxy-L-kynurenine (L-3OHKyn). Required for synthesis of quinolinic acid. The polypeptide is Kynurenine 3-monooxygenase (bna4) (Aspergillus terreus (strain NIH 2624 / FGSC A1156)).